A 760-amino-acid polypeptide reads, in one-letter code: Serine/threonine-protein kinase dkf-1 (760 aa).

2 Phorbol-ester/DAG-type zinc fingers span residues 103 to 153 and 194 to 244; these read PHVV…GIIV and PHTL…PSNC. The 129-residue stretch at 316–444 folds into the PH domain; the sequence is KNLEGWMIHF…QFIKESLQPP (129 aa). The Protein kinase domain maps to 464 to 725; sequence VLSDKTLGSG…IEKCLEHGWL (262 aa). ATP contacts are provided by residues 470–478 and Lys493; that span reads LGSGQFGTV. The Proton acceptor role is filled by Asp589. At Thr626 the chain carries Phosphothreonine.

It belongs to the protein kinase superfamily. CAMK Ser/Thr protein kinase family. PKD subfamily. It depends on Mg(2+) as a cofactor. Post-translationally, prolonged phosphorylation at Thr-626 results in ubiquitination and degradation.

Its subcellular location is the cytoplasm. The protein localises to the membrane. The catalysed reaction is L-seryl-[protein] + ATP = O-phospho-L-seryl-[protein] + ADP + H(+). The enzyme catalyses L-threonyl-[protein] + ATP = O-phospho-L-threonyl-[protein] + ADP + H(+). Activated by DAG and phorbol esters. Phorbol-ester/DAG-type domain 1 binds phorbol ester with high affinity and mediates accumulation at the cell periphery. Phorbol-ester/DAG-type domain 2 binds phorbol ester with low affinity but may mediate initial contact, resulting in a conformational change allowing previously occluded domain 1 to anchor the kinase. Phosphorylation on Thr-626 is then also required for activation and may also result in a further conformational change. Its function is as follows. Converts transient diacylglycerol (DAG) signals into prolonged physiological effects, independently of PKC. Role in the regulation of growth and neuromuscular control of movement. Involved in immune response to S.aureus bacterium by activating transcription factor hlh-30 downstream of phospholipase plc-1. The chain is Serine/threonine-protein kinase dkf-1 from Caenorhabditis briggsae.